The following is a 138-amino-acid chain: Cysteine desulfuration protein SufE (138 aa).

Cys-51 serves as the catalytic Cysteine persulfide intermediate.

This sequence belongs to the SufE family. In terms of assembly, homodimer. Interacts with SufS.

It localises to the cytoplasm. It participates in cofactor biosynthesis; iron-sulfur cluster biosynthesis. Participates in cysteine desulfuration mediated by SufS. Cysteine desulfuration mobilizes sulfur from L-cysteine to yield L-alanine and constitutes an essential step in sulfur metabolism for biosynthesis of a variety of sulfur-containing biomolecules. Functions as a sulfur acceptor for SufS, by mediating the direct transfer of the sulfur atom from the S-sulfanylcysteine of SufS, an intermediate product of cysteine desulfuration process. The polypeptide is Cysteine desulfuration protein SufE (Cronobacter sakazakii (strain ATCC BAA-894) (Enterobacter sakazakii)).